Reading from the N-terminus, the 355-residue chain is Peptide chain release factor 1 (355 aa).

N5-methylglutamine is present on Gln233.

This sequence belongs to the prokaryotic/mitochondrial release factor family. Post-translationally, methylated by PrmC. Methylation increases the termination efficiency of RF1.

The protein localises to the cytoplasm. Its function is as follows. Peptide chain release factor 1 directs the termination of translation in response to the peptide chain termination codons UAG and UAA. This is Peptide chain release factor 1 from Clostridium tetani (strain Massachusetts / E88).